The following is a 214-amino-acid chain: Ribonuclease P protein component 3 (214 aa).

It belongs to the eukaryotic/archaeal RNase P protein component 3 family. In terms of assembly, consists of a catalytic RNA component and at least 4-5 protein subunits. Forms a subcomplex with Rnp2 which stimulates the catalytic RNA.

The protein localises to the cytoplasm. The catalysed reaction is Endonucleolytic cleavage of RNA, removing 5'-extranucleotides from tRNA precursor.. In terms of biological role, part of ribonuclease P, a protein complex that generates mature tRNA molecules by cleaving their 5'-ends. The RNA is catalytic, but its KM for pre-tRNA is 170-fold decreased in the presence of the 4 known protein subunits (Rnp1-4). The protein subunits also decrease the amount of Mg(2+) needed for activity. This chain is Ribonuclease P protein component 3, found in Pyrococcus furiosus (strain ATCC 43587 / DSM 3638 / JCM 8422 / Vc1).